The chain runs to 832 residues: Translation initiation factor IF-2 (832 aa).

Residues 1-244 (MSDTDGKKTL…KAMGGSQERE (244 aa)) are disordered. The segment covering 18–27 (TGQVKQSFSH) has biased composition (polar residues). The span at 81 to 141 (KANESEEAER…EARKKAEADA (61 aa)) shows a compositional bias: basic and acidic residues. The span at 142–171 (SSKPAAARSKADDPATMDPAAAQAAEARGA) shows a compositional bias: low complexity. Composition is skewed to basic and acidic residues over residues 178-201 (PRKERTADRAQPRKEQKGKGDDRR) and 227-244 (RKQERERRKAMGGSQERE). The 169-residue stretch at 329-497 (PRPPVITVMG…SIALQAEILE (169 aa)) folds into the tr-type G domain. A G1 region spans residues 338–345 (GHVDHGKT). 338–345 (GHVDHGKT) lines the GTP pocket. The interval 363–367 (GITQH) is G2. The segment at 385–388 (DTPG) is G3. Residues 385-389 (DTPGH) and 439-442 (NKID) each bind GTP. A G4 region spans residues 439 to 442 (NKID). The segment at 475–477 (SAI) is G5.

This sequence belongs to the TRAFAC class translation factor GTPase superfamily. Classic translation factor GTPase family. IF-2 subfamily.

It localises to the cytoplasm. One of the essential components for the initiation of protein synthesis. Protects formylmethionyl-tRNA from spontaneous hydrolysis and promotes its binding to the 30S ribosomal subunits. Also involved in the hydrolysis of GTP during the formation of the 70S ribosomal complex. This chain is Translation initiation factor IF-2, found in Dinoroseobacter shibae (strain DSM 16493 / NCIMB 14021 / DFL 12).